Here is a 444-residue protein sequence, read N- to C-terminus: Cholecystokinin receptor type A (444 aa).

The Extracellular segment spans residues 1–56 (MSHSPARQHLVESSRMDVVDSLLMNGSNITPPCELGLENETLFCLDQPQPSKEWQS). N-linked (GlcNAc...) asparagine glycosylation is found at asparagine 25 and asparagine 39. The cysteines at positions 33 and 44 are disulfide-linked. The chain crosses the membrane as a helical span at residues 57–82 (ALQILLYSIIFLLSVLGNTLVITVLI). Residues 83 to 92 (RNKRMRTVTN) are Cytoplasmic-facing. A helical membrane pass occupies residues 93–119 (IFLLSLAVSDLMLCLFCMPFNLIPNLL). At 120 to 130 (KDFIFGSAVCK) the chain is on the extracellular side. Cysteines 129 and 211 form a disulfide. Residues 131 to 152 (TTTYFMGTSVSVSTFNLVAISL) traverse the membrane as a helical segment. The Cytoplasmic segment spans residues 153–172 (ERYGAICRPLQSRVWQTKSH). The helical transmembrane segment at 173–193 (ALKVIAATWCLSFTIMTPYPI) threads the bilayer. Residues 194–225 (YSNLVPFTKNNNQTANMCRFLLPSDAMQQSWQ) lie on the Extracellular side of the membrane. A glycan (N-linked (GlcNAc...) asparagine) is linked at asparagine 205. The chain crosses the membrane as a helical span at residues 226-249 (TFLLLILFLLPGIVMVVAYGLISL). Residues 250–329 (ELYQGIKFDA…NLIAKKRVIR (80 aa)) lie on the Cytoplasmic side of the membrane. The interval 263–288 (KSAKEKKPSTGSSTRYEDSDGCYLQK) is disordered. Residues 330-350 (MLIVIVVLFFLCWMPIFSANA) traverse the membrane as a helical segment. Residues 351 to 365 (WRAYDTVSAEKHLSG) lie on the Extracellular side of the membrane. A helical membrane pass occupies residues 366-389 (TPISFILLLSYTSSCVNPIIYCFM). Topologically, residues 390–444 (NKRFRLGFMATFPCCPNPGPPGVRGEVGEEEDGRTIRALLSRYSYSHMSTSAPPP) are cytoplasmic. Cysteine 403 carries the S-palmitoyl cysteine lipid modification.

Belongs to the G-protein coupled receptor 1 family. In terms of tissue distribution, pancreas and brain. Also expressed in the gastrointestinal system and vagus nerve.

The protein resides in the cell membrane. In terms of biological role, receptor for cholecystokinin. Mediates pancreatic growth and enzyme secretion, smooth muscle contraction of the gall bladder and stomach. Has a 1000-fold higher affinity for CCK rather than for gastrin. It modulates feeding and dopamine-induced behavior in the central and peripheral nervous system. This receptor mediates its action by association with G proteins that activate a phosphatidylinositol-calcium second messenger system. The chain is Cholecystokinin receptor type A (Cckar) from Rattus norvegicus (Rat).